Consider the following 339-residue polypeptide: MRILGIETSCDETGIAIYDDEKGLLAHKLYSQIKLHADYGGVVPELASRDHVKKTIPLIKEALKEANLTAKDIDGVAYTAGPGLVGALLVGATIGRSLAYAWGVPAVPVHHMEGHLLAPMLEDNPPPFPFVAVLVSGGHSMMVEVKGIGEYKILGESIDDAAGEAFDKTAKLMGLDYPGGPLLSKLAEKGTPGRFKFPRPMTNVPGLDMSFSGLKTFTANTIAANGDDEQTRADIAYAFEEAVCATLAIKCKRALEQTGMKRIVIAGGVSANRRLRAELEKLAHKVGGDVYYPRTEFCTDNGAMIAYAGMQRLKNNEVSDLAVEARPRWPIDQLTPVMK.

Fe cation contacts are provided by His-111 and His-115. Substrate is bound by residues 134 to 138, Asp-167, Gly-180, and Asn-272; that span reads LVSGG. Asp-300 lines the Fe cation pocket.

It belongs to the KAE1 / TsaD family. Fe(2+) is required as a cofactor.

The protein localises to the cytoplasm. It catalyses the reaction L-threonylcarbamoyladenylate + adenosine(37) in tRNA = N(6)-L-threonylcarbamoyladenosine(37) in tRNA + AMP + H(+). Functionally, required for the formation of a threonylcarbamoyl group on adenosine at position 37 (t(6)A37) in tRNAs that read codons beginning with adenine. Is involved in the transfer of the threonylcarbamoyl moiety of threonylcarbamoyl-AMP (TC-AMP) to the N6 group of A37, together with TsaE and TsaB. TsaD likely plays a direct catalytic role in this reaction. In Vibrio vulnificus (strain YJ016), this protein is tRNA N6-adenosine threonylcarbamoyltransferase.